Here is a 218-residue protein sequence, read N- to C-terminus: Small ribosomal subunit protein uS4 (218 aa).

Positions 111 to 175 constitute an S4 RNA-binding domain; it reads RRLQTQVLRL…SPLKNESHPE (65 aa). The disordered stretch occupies residues 192-218; sequence KAAAEAKQAREKPPERGGGRRKRGGRR. Positions 198–209 are enriched in basic and acidic residues; the sequence is KQAREKPPERGG.

The protein belongs to the universal ribosomal protein uS4 family. As to quaternary structure, part of the 30S ribosomal subunit. Contacts protein S5. The interaction surface between S4 and S5 is involved in control of translational fidelity.

One of the primary rRNA binding proteins, it binds directly to 16S rRNA where it nucleates assembly of the body of the 30S subunit. Its function is as follows. With S5 and S12 plays an important role in translational accuracy. The polypeptide is Small ribosomal subunit protein uS4 (Methanosarcina acetivorans (strain ATCC 35395 / DSM 2834 / JCM 12185 / C2A)).